The primary structure comprises 213 residues: MLIIILLLIASYLLGAIPFGLWIGKIFFKKNLHDYGSGNTGTTNTFRILGVKAGIAVFIFDLLKGTLATLLPLIFHINGVSPLIFGLLAVIGHTLSIFDHFKGGKAVATSAGVVLGFSPFFLLYLLVIFILVLWLFSMISLSSVVAAIFALLGILIFPSFGFILTSYDLLFSIIIFALAIIIIFRHKTNLKRIKNHCESLVPFGLNLSGQKEK.

Transmembrane regions (helical) follow at residues 3–23, 48–68, 71–91, 119–139, 144–164, and 165–185; these read IIIL…GLWI, ILGV…GTLA, LPLI…LAVI, PFFL…FSMI, VVAA…GFIL, and TSYD…IIFR.

Belongs to the PlsY family. Probably interacts with PlsX.

It is found in the cell membrane. It catalyses the reaction an acyl phosphate + sn-glycerol 3-phosphate = a 1-acyl-sn-glycero-3-phosphate + phosphate. It participates in lipid metabolism; phospholipid metabolism. Its function is as follows. Catalyzes the transfer of an acyl group from acyl-phosphate (acyl-PO(4)) to glycerol-3-phosphate (G3P) to form lysophosphatidic acid (LPA). This enzyme utilizes acyl-phosphate as fatty acyl donor, but not acyl-CoA or acyl-ACP. This chain is Glycerol-3-phosphate acyltransferase, found in Lactococcus lactis subsp. cremoris (strain SK11).